Reading from the N-terminus, the 173-residue chain is Photosystem I assembly protein Ycf3 (173 aa).

TPR repeat units follow at residues 35–68 (AFYY…EKDP), 72–105 (SFIL…NPNL), and 120–153 (GNKL…APYN).

It belongs to the Ycf3 family.

The protein resides in the plastid. It localises to the chloroplast thylakoid membrane. In terms of biological role, essential for the assembly of the photosystem I (PSI) complex. May act as a chaperone-like factor to guide the assembly of the PSI subunits. This Cyanidium caldarium (Red alga) protein is Photosystem I assembly protein Ycf3.